Here is a 129-residue protein sequence, read N- to C-terminus: Follitropin subunit beta (129 aa).

The first 20 residues, 1 to 20 (MKSVQFCFLFCCWRAICCRS), serve as a signal peptide directing secretion. 6 disulfide bridges follow: Cys-21–Cys-69, Cys-35–Cys-84, Cys-38–Cys-122, Cys-46–Cys-100, Cys-50–Cys-102, and Cys-105–Cys-112. N-linked (GlcNAc...) asparagine glycans are attached at residues Asn-25 and Asn-42.

The protein belongs to the glycoprotein hormones subunit beta family. As to quaternary structure, heterodimer. The active follitropin is a heterodimer composed of an alpha chain/CGA shared with other hormones and a unique beta chain/FSHB shown here.

It is found in the secreted. Together with the alpha chain CGA constitutes follitropin, the follicle-stimulating hormone, and provides its biological specificity to the hormone heterodimer. Binds FSHR, a G protein-coupled receptor, on target cells to activate downstream signaling pathways. Follitropin is involved in follicle development and spermatogenesis in reproductive organs. The protein is Follitropin subunit beta (FSHB) of Bos taurus (Bovine).